A 289-amino-acid chain; its full sequence is NFIL3 like protein (289 aa).

The disordered stretch occupies residues 1–27 (MDVGFSGLPDVSQSHSKTLWGARGRGP). Residues 42-105 (DTVYWEKRRK…GLLPLTGGPR (64 aa)) form the bZIP domain. The interval 48–64 (KRRKNNEAAKRSREKRR) is basic motif. The interval 70–91 (IEGRLAALMEENALLKGELKAL) is leucine-zipper.

It belongs to the bZIP family. NFIL3 subfamily.

The protein localises to the nucleus. This Homo sapiens (Human) protein is NFIL3 like protein.